A 363-amino-acid chain; its full sequence is Alanine racemase (363 aa).

The Proton acceptor; specific for D-alanine role is filled by Lys35. Residue Lys35 is modified to N6-(pyridoxal phosphate)lysine. Arg134 serves as a coordination point for substrate. Residue Tyr259 is the Proton acceptor; specific for L-alanine of the active site. Met307 lines the substrate pocket.

The protein belongs to the alanine racemase family. Pyridoxal 5'-phosphate is required as a cofactor.

The enzyme catalyses L-alanine = D-alanine. Its pathway is amino-acid biosynthesis; D-alanine biosynthesis; D-alanine from L-alanine: step 1/1. Its function is as follows. Catalyzes the interconversion of L-alanine and D-alanine. May also act on other amino acids. This is Alanine racemase (alr) from Shewanella denitrificans (strain OS217 / ATCC BAA-1090 / DSM 15013).